The chain runs to 957 residues: Glycine dehydrogenase (decarboxylating) (957 aa).

Position 708 is an N6-(pyridoxal phosphate)lysine (lysine 708).

The protein belongs to the GcvP family. As to quaternary structure, the glycine cleavage system is composed of four proteins: P, T, L and H. Pyridoxal 5'-phosphate serves as cofactor.

The catalysed reaction is N(6)-[(R)-lipoyl]-L-lysyl-[glycine-cleavage complex H protein] + glycine + H(+) = N(6)-[(R)-S(8)-aminomethyldihydrolipoyl]-L-lysyl-[glycine-cleavage complex H protein] + CO2. The glycine cleavage system catalyzes the degradation of glycine. The P protein binds the alpha-amino group of glycine through its pyridoxal phosphate cofactor; CO(2) is released and the remaining methylamine moiety is then transferred to the lipoamide cofactor of the H protein. This Klebsiella pneumoniae (strain 342) protein is Glycine dehydrogenase (decarboxylating).